The primary structure comprises 132 residues: Large ribosomal subunit protein uL14 (132 aa).

Belongs to the universal ribosomal protein uL14 family. Part of the 50S ribosomal subunit. Forms a cluster with proteins L3 and L24e, part of which may contact the 16S rRNA in 2 intersubunit bridges.

Binds to 23S rRNA. Forms part of two intersubunit bridges in the 70S ribosome. The polypeptide is Large ribosomal subunit protein uL14 (Methanocella arvoryzae (strain DSM 22066 / NBRC 105507 / MRE50)).